The following is a 353-amino-acid chain: Phospho-furanose lactonase (353 aa).

Positions 25, 27, 153, 186, and 214 each coordinate Zn(2+). Lysine 153 is modified (N6-carboxylysine). A substrate-binding site is contributed by lysine 244–tyrosine 245. Zn(2+) is bound at residue aspartate 272. Residue arginine 275–tyrosine 278 participates in substrate binding.

Belongs to the metallo-dependent hydrolases superfamily. Phosphotriesterase family. Requires Zn(2+) as cofactor.

The enzyme catalyses a 1,4-lactone + H2O = a 4-hydroxyacid + H(+). It catalyses the reaction D-xylono-1,4-lactone 5-phosphate + H2O = 5-phospho-D-xylonate + H(+). It carries out the reaction L-arabino-1,4-lactone 5-phosphate + H2O = 5-phospho-L-arabinonate + H(+). Catalyzes the hydrolysis of D-xylono-1,4-lactone-5-phosphate and L-arabino-1,4-lactone-5-phosphate. Also able to hydrolyze carboxy 1,4-lactones. This chain is Phospho-furanose lactonase, found in Mycoplasmopsis agalactiae (strain NCTC 10123 / CIP 59.7 / PG2) (Mycoplasma agalactiae).